The primary structure comprises 127 residues: uncharacterized protein (127 aa).

This is an uncharacterized protein from Escherichia coli (strain K12).